Reading from the N-terminus, the 292-residue chain is Malonyl-S-ACP:biotin-protein carboxyltransferase MADD (292 aa).

Residues Met1–Lys281 enclose the CoA carboxyltransferase C-terminal domain.

It localises to the cytoplasm. It carries out the reaction N(6)-biotinyl-L-lysyl-[protein] + malonyl-[ACP] = N(6)-carboxybiotinyl-L-lysyl-[protein] + acetyl-[ACP]. Its function is as follows. Gamma subunit of the biotin-dependent malonate decarboxylase multienzyme complex (EC 7.2.4.4). The two subunits MADC and MADD are required for the transfer of the malonate carboxy group from the acyl-carrier protein (ACP) to the prosthetic group of the biotin carrier MADF. Required for the regeneration of ACP. The polypeptide is Malonyl-S-ACP:biotin-protein carboxyltransferase MADD (madD) (Malonomonas rubra).